The sequence spans 527 residues: N-acetylglutamate synthase, mitochondrial (527 aa).

Residues 1–18 (MATAWVATALRSAAAARR) constitute a mitochondrion transit peptide. Residues 14–91 (AAARRLRSPG…PLESPAPPAG (78 aa)) form a disordered region. Residues 19-369 (LRSPGGPGGS…CGTLFKNAER (351 aa)) are amino-acid kinase domain (AAK). The span at 54–63 (AHAEDAEGAK) shows a compositional bias: basic and acidic residues. Residues 77–89 (TPLPTPLESPAPP) are compositionally biased toward pro residues. Residues 368 to 519 (ERMLRVRNLD…HAKGLPDSFC (152 aa)) enclose the N-acetyltransferase domain. Substrate contacts are provided by residues K394, K437, and 467–472 (RSRVTN).

It belongs to the acetyltransferase family. Homodimer. Homotetramer. Post-translationally, probably processed by mitochondrial processing peptidase (MPP). The long form has not yet been isolated. Highly expressed in the liver and small intestine. Weakly expressed in the kidney, spleen and testis.

It is found in the mitochondrion matrix. It carries out the reaction L-glutamate + acetyl-CoA = N-acetyl-L-glutamate + CoA + H(+). Its pathway is amino-acid biosynthesis; L-arginine biosynthesis; N(2)-acetyl-L-ornithine from L-glutamate: step 1/4. Increased by L-arginine. Plays a role in the regulation of ureagenesis by producing the essential cofactor N-acetylglutamate (NAG), thus modulating carbamoylphosphate synthase I (CPS1) activity. This is N-acetylglutamate synthase, mitochondrial (Nags) from Mus musculus (Mouse).